Here is a 279-residue protein sequence, read N- to C-terminus: HTH-type transcriptional regulator BhcR (279 aa).

Basic residues predominate over residues 1–13 (MSVQIRKRGRPRG). Residues 1–21 (MSVQIRKRGRPRGRAGGLGAE) are disordered. Positions 26 to 87 (IRALDRALDI…SQTQAWHVGP (62 aa)) constitute an HTH iclR-type domain. Residues 47 to 66 (LTEIAQRLDMAPSTVHRVLV) constitute a DNA-binding region (H-T-H motif). In terms of domain architecture, IclR-ED spans 102 to 271 (LVERARPLLR…ARELSFGMAP (170 aa)).

Its function is as follows. Transcriptional regulator of the bhc gene cluster involved in glycolate and glyoxylate assimilation via the beta-hydroxyaspartate cycle (BHAC). Glyoxylate negatively affects the interaction of BhcR with the promoter region of the bhc gene cluster. The protein is HTH-type transcriptional regulator BhcR of Paracoccus denitrificans (strain Pd 1222).